Here is a 157-residue protein sequence, read N- to C-terminus: 2-C-methyl-D-erythritol 2,4-cyclodiphosphate synthase (157 aa).

Aspartate 8 and histidine 10 together coordinate a divalent metal cation. Residues 8 to 10 (DVH) and 34 to 35 (HS) contribute to the 4-CDP-2-C-methyl-D-erythritol 2-phosphate site. Histidine 42 lines the a divalent metal cation pocket. 4-CDP-2-C-methyl-D-erythritol 2-phosphate-binding positions include 56 to 58 (DIG), 61 to 65 (FPDTD), 100 to 106 (AQAPKMA), 132 to 135 (TTTE), phenylalanine 139, and arginine 142.

This sequence belongs to the IspF family. Homotrimer. The cofactor is a divalent metal cation.

It carries out the reaction 4-CDP-2-C-methyl-D-erythritol 2-phosphate = 2-C-methyl-D-erythritol 2,4-cyclic diphosphate + CMP. It participates in isoprenoid biosynthesis; isopentenyl diphosphate biosynthesis via DXP pathway; isopentenyl diphosphate from 1-deoxy-D-xylulose 5-phosphate: step 4/6. In terms of biological role, involved in the biosynthesis of isopentenyl diphosphate (IPP) and dimethylallyl diphosphate (DMAPP), two major building blocks of isoprenoid compounds. Catalyzes the conversion of 4-diphosphocytidyl-2-C-methyl-D-erythritol 2-phosphate (CDP-ME2P) to 2-C-methyl-D-erythritol 2,4-cyclodiphosphate (ME-CPP) with a corresponding release of cytidine 5-monophosphate (CMP). This chain is 2-C-methyl-D-erythritol 2,4-cyclodiphosphate synthase, found in Ectopseudomonas mendocina (strain ymp) (Pseudomonas mendocina).